The following is a 350-amino-acid chain: Transmembrane protein 185B (350 aa).

A run of 7 helical transmembrane segments spans residues 16–36 (LIYA…DGII), 41–61 (WAVF…ASVG), 81–101 (FKAM…EILV), 111–131 (FWLL…AACV), 168–188 (WLVV…VVLY), 211–231 (VTMA…EVLL), and 240–260 (TFSY…LMAT).

This sequence belongs to the TMEM185 family.

The protein resides in the membrane. This chain is Transmembrane protein 185B (Tmem185b), found in Mus musculus (Mouse).